Reading from the N-terminus, the 364-residue chain is DNA polymerase IV (364 aa).

In terms of domain architecture, UmuC spans 14–198 (IIHIDMDAFF…LPIEKFHGVG (185 aa)). Asp-18 and Asp-116 together coordinate Mg(2+). The active site involves Glu-117.

Belongs to the DNA polymerase type-Y family. Monomer. It depends on Mg(2+) as a cofactor.

It localises to the cytoplasm. It catalyses the reaction DNA(n) + a 2'-deoxyribonucleoside 5'-triphosphate = DNA(n+1) + diphosphate. In terms of biological role, poorly processive, error-prone DNA polymerase involved in untargeted mutagenesis. Copies undamaged DNA at stalled replication forks, which arise in vivo from mismatched or misaligned primer ends. These misaligned primers can be extended by PolIV. Exhibits no 3'-5' exonuclease (proofreading) activity. May be involved in translesional synthesis, in conjunction with the beta clamp from PolIII. This is DNA polymerase IV from Streptococcus pyogenes serotype M5 (strain Manfredo).